A 177-amino-acid polypeptide reads, in one-letter code: Large ribosomal subunit protein uL6 (177 aa).

It belongs to the universal ribosomal protein uL6 family. As to quaternary structure, part of the 50S ribosomal subunit.

This protein binds to the 23S rRNA, and is important in its secondary structure. It is located near the subunit interface in the base of the L7/L12 stalk, and near the tRNA binding site of the peptidyltransferase center. This is Large ribosomal subunit protein uL6 from Cronobacter sakazakii (strain ATCC BAA-894) (Enterobacter sakazakii).